A 221-amino-acid polypeptide reads, in one-letter code: 7-cyano-7-deazaguanine synthase (221 aa).

8 to 18 (LSGGMDSAAVI) serves as a coordination point for ATP. The Zn(2+) site is built by Cys-186, Cys-196, Cys-199, and Cys-202.

This sequence belongs to the QueC family. The cofactor is Zn(2+).

It carries out the reaction 7-carboxy-7-deazaguanine + NH4(+) + ATP = 7-cyano-7-deazaguanine + ADP + phosphate + H2O + H(+). Its pathway is purine metabolism; 7-cyano-7-deazaguanine biosynthesis. Functionally, catalyzes the ATP-dependent conversion of 7-carboxy-7-deazaguanine (CDG) to 7-cyano-7-deazaguanine (preQ(0)). The chain is 7-cyano-7-deazaguanine synthase from Stenotrophomonas maltophilia (strain K279a).